Consider the following 160-residue polypeptide: Cytochrome b6-f complex subunit 4 (160 aa).

The next 3 membrane-spanning stretches (helical) occupy residues 36–56 (ILYMFPICILGALGLIAGLAI), 95–115 (LLGIAGMAAIPLGLMLVPFIE), and 127–147 (PIAMTVFLFGTAAALWLGAGA).

Belongs to the cytochrome b family. PetD subfamily. The 4 large subunits of the cytochrome b6-f complex are cytochrome b6, subunit IV (17 kDa polypeptide, PetD), cytochrome f and the Rieske protein, while the 4 small subunits are PetG, PetL, PetM and PetN. The complex functions as a dimer.

It localises to the cellular thylakoid membrane. Functionally, component of the cytochrome b6-f complex, which mediates electron transfer between photosystem II (PSII) and photosystem I (PSI), cyclic electron flow around PSI, and state transitions. The sequence is that of Cytochrome b6-f complex subunit 4 from Synechocystis sp. (strain ATCC 27184 / PCC 6803 / Kazusa).